Reading from the N-terminus, the 442-residue chain is UDP-glycosyltransferase 78D4 (442 aa).

UDP-alpha-D-glucose is bound by residues 322-324 (APQ), 339-347 (HGGWNSVLE), and 361-364 (FGDH).

This sequence belongs to the UDP-glycosyltransferase family.

This is UDP-glycosyltransferase 78D4 (UGT78D4) from Arabidopsis thaliana (Mouse-ear cress).